The sequence spans 324 residues: tRNA U34 carboxymethyltransferase (324 aa).

Residues Lys92, Trp106, Lys111, Gly131, 181-182, Met197, Tyr201, and Arg316 each bind carboxy-S-adenosyl-L-methionine; that span reads LE.

It belongs to the class I-like SAM-binding methyltransferase superfamily. CmoB family. As to quaternary structure, homotetramer.

The enzyme catalyses carboxy-S-adenosyl-L-methionine + 5-hydroxyuridine(34) in tRNA = 5-carboxymethoxyuridine(34) in tRNA + S-adenosyl-L-homocysteine + H(+). Its function is as follows. Catalyzes carboxymethyl transfer from carboxy-S-adenosyl-L-methionine (Cx-SAM) to 5-hydroxyuridine (ho5U) to form 5-carboxymethoxyuridine (cmo5U) at position 34 in tRNAs. This Syntrophotalea carbinolica (strain DSM 2380 / NBRC 103641 / GraBd1) (Pelobacter carbinolicus) protein is tRNA U34 carboxymethyltransferase.